The following is a 125-amino-acid chain: Small ribosomal subunit protein uS12 (125 aa).

At Asp-89 the chain carries 3-methylthioaspartic acid.

It belongs to the universal ribosomal protein uS12 family. As to quaternary structure, part of the 30S ribosomal subunit. Contacts proteins S8 and S17. May interact with IF1 in the 30S initiation complex.

Its function is as follows. With S4 and S5 plays an important role in translational accuracy. Interacts with and stabilizes bases of the 16S rRNA that are involved in tRNA selection in the A site and with the mRNA backbone. Located at the interface of the 30S and 50S subunits, it traverses the body of the 30S subunit contacting proteins on the other side and probably holding the rRNA structure together. The combined cluster of proteins S8, S12 and S17 appears to hold together the shoulder and platform of the 30S subunit. This is Small ribosomal subunit protein uS12 from Clostridium botulinum (strain ATCC 19397 / Type A).